The following is a 380-amino-acid chain: Anthranilate phosphoribosyltransferase (380 aa).

Residues Gly-109, Asn-119, Ser-121, Thr-122, Lys-142, Ser-144, and Ser-146 each contribute to the 5-phospho-alpha-D-ribose 1-diphosphate site. 2 residues coordinate Mg(2+): Asp-258 and Glu-259.

It belongs to the anthranilate phosphoribosyltransferase family. Homodimer. The cofactor is Mg(2+).

It catalyses the reaction N-(5-phospho-beta-D-ribosyl)anthranilate + diphosphate = 5-phospho-alpha-D-ribose 1-diphosphate + anthranilate. It functions in the pathway amino-acid biosynthesis; L-tryptophan biosynthesis; L-tryptophan from chorismate: step 2/5. In terms of biological role, catalyzes the transfer of the phosphoribosyl group of 5-phosphorylribose-1-pyrophosphate (PRPP) to anthranilate to yield N-(5'-phosphoribosyl)-anthranilate (PRA), the second step in tryptophan biosynthesis. This is Anthranilate phosphoribosyltransferase from Saccharomyces cerevisiae (strain ATCC 204508 / S288c) (Baker's yeast).